Consider the following 274-residue polypeptide: Tropomyosin (274 aa).

The disordered stretch occupies residues 1-30; sequence MKLEKDNAMDRADTLEQQNKEANIRAEKAE. The stretch at 1–274 forms a coiled coil; the sequence is MKLEKDNAMD…DQTFSELSGY (274 aa).

Belongs to the tropomyosin family. Homodimer.

Its function is as follows. Tropomyosin, in association with the troponin complex, plays a central role in the calcium dependent regulation of muscle contraction. In Panulirus stimpsoni (Chinese spiny lobster), this protein is Tropomyosin.